A 223-amino-acid chain; its full sequence is Type III pantothenate kinase (223 aa).

17-24 (DIGNTHIH) is a binding site for ATP. Residues tyrosine 81 and 85-88 (GIDR) each bind substrate. Aspartate 87 serves as the catalytic Proton acceptor. Position 102 (aspartate 102) interacts with K(+). Serine 105 contributes to the ATP binding site. Substrate is bound at residue threonine 157.

Belongs to the type III pantothenate kinase family. In terms of assembly, homodimer. It depends on NH4(+) as a cofactor. K(+) serves as cofactor.

Its subcellular location is the cytoplasm. It carries out the reaction (R)-pantothenate + ATP = (R)-4'-phosphopantothenate + ADP + H(+). It participates in cofactor biosynthesis; coenzyme A biosynthesis; CoA from (R)-pantothenate: step 1/5. Its function is as follows. Catalyzes the phosphorylation of pantothenate (Pan), the first step in CoA biosynthesis. The chain is Type III pantothenate kinase from Helicobacter pylori (strain HPAG1).